We begin with the raw amino-acid sequence, 248 residues long: Adenosylcobinamide-GDP ribazoletransferase (248 aa).

Helical transmembrane passes span 24–44, 70–90, 106–126, 134–154, 168–188, 189–209, and 228–248; these read EINLKKGSALLPFVGVIIGAW, IIITGGFHVDALADTADGLFS, VGANGVIAICFYFLFYGSLFL, IGWLFFVLPIVAKGVTMLLFA, IFLGVPWWPVVIAQVIVLVAL, GAFFSYIGVIAYAGVILFTII, and AGGQMGQLICLFCLVLLWGLI.

It belongs to the CobS family. The cofactor is Mg(2+).

The protein resides in the cell membrane. It carries out the reaction alpha-ribazole + adenosylcob(III)inamide-GDP = adenosylcob(III)alamin + GMP + H(+). The catalysed reaction is alpha-ribazole 5'-phosphate + adenosylcob(III)inamide-GDP = adenosylcob(III)alamin 5'-phosphate + GMP + H(+). It functions in the pathway cofactor biosynthesis; adenosylcobalamin biosynthesis; adenosylcobalamin from cob(II)yrinate a,c-diamide: step 7/7. In terms of biological role, joins adenosylcobinamide-GDP and alpha-ribazole to generate adenosylcobalamin (Ado-cobalamin). Also synthesizes adenosylcobalamin 5'-phosphate from adenosylcobinamide-GDP and alpha-ribazole 5'-phosphate. The chain is Adenosylcobinamide-GDP ribazoletransferase from Listeria monocytogenes serotype 4b (strain F2365).